We begin with the raw amino-acid sequence, 293 residues long: Extracellular metalloprotease PODANS_2_14170 (293 aa).

A signal peptide spans 1–18 (MRFSLALAAAGLAQTAFA). N-linked (GlcNAc...) asparagine glycosylation is present at Asn-60. His-206 contacts Zn(2+). Residue Glu-207 is part of the active site. His-210 contributes to the Zn(2+) binding site. The cysteines at positions 242 and 269 are disulfide-linked.

It belongs to the peptidase M43B family.

Its subcellular location is the secreted. Functionally, secreted metalloproteinase that allows assimilation of proteinaceous substrates. This is Extracellular metalloprotease PODANS_2_14170 from Podospora anserina (strain S / ATCC MYA-4624 / DSM 980 / FGSC 10383) (Pleurage anserina).